Consider the following 110-residue polypeptide: Protein RnfH (110 aa).

The disordered stretch occupies residues 86–110 (RQRRVEKTRKAGSIEGRRWQNKDSR). Residues 100-110 (EGRRWQNKDSR) are compositionally biased toward basic and acidic residues.

The protein belongs to the UPF0125 (RnfH) family.

This Paraburkholderia xenovorans (strain LB400) protein is Protein RnfH.